The following is a 348-amino-acid chain: Eukaryotic translation initiation factor 3 subunit F (348 aa).

The MPN domain maps to 30-166 (VVIQPQAIFS…TRTYISAPVG (137 aa)). The span at 312–327 (STAIGGTGAESGGQRG) shows a compositional bias: gly residues. The tract at residues 312 to 348 (STAIGGTGAESGGQRGGQRNNRQRGGQQRNQAEELRA) is disordered. Over residues 328 to 341 (GQRNNRQRGGQQRN) the composition is skewed to low complexity.

It belongs to the eIF-3 subunit F family. Component of the eukaryotic translation initiation factor 3 (eIF-3) complex.

It localises to the cytoplasm. In terms of biological role, component of the eukaryotic translation initiation factor 3 (eIF-3) complex, which is involved in protein synthesis of a specialized repertoire of mRNAs and, together with other initiation factors, stimulates binding of mRNA and methionyl-tRNAi to the 40S ribosome. The eIF-3 complex specifically targets and initiates translation of a subset of mRNAs involved in cell proliferation. The polypeptide is Eukaryotic translation initiation factor 3 subunit F (Coccidioides immitis (strain RS) (Valley fever fungus)).